The sequence spans 523 residues: Occludin (523 aa).

Residues 1–20 (MSVRPFESPPPYRPDEFKPN) form a disordered region. The Cytoplasmic segment spans residues 1–66 (MSVRPFESPP…KWTSPPGVIR (66 aa)). The MARVEL domain maps to 60–269 (SPPGVIRILS…IIVFAVKTRR (210 aa)). The helical transmembrane segment at 67-87 (ILSMLVIVMCIAVFACVASTL) threads the bilayer. Residues 88–140 (AWDRAYGTGIFGGSMNYPYGSGFGSYGGGFGGYGYGYGYGYGGYTDPRAAKGF) lie on the Extracellular side of the membrane. A helical transmembrane segment spans residues 141-161 (LLAMAAFCFIASLVIFVTSVI). Residues 162–173 (RSGMSRTRRYYL) lie on the Cytoplasmic side of the membrane. Residues 174 to 194 (IVIIVSAILGIMVFIATIVYI) form a helical membrane-spanning segment. The Extracellular segment spans residues 195–244 (MGVNPTAQASGSMYGSQIYTICSQFYTPGGTGLYVDQYLYHYCVVDPQEA). Cysteines 216 and 237 form a disulfide. A helical membrane pass occupies residues 245 to 265 (IAIVLGFMIIVAFALIIVFAV). Topologically, residues 266–523 (KTRRKMDRYD…MVGDYDRRKT (258 aa)) are cytoplasmic. S302 is modified (phosphoserine). The disordered stretch occupies residues 302–338 (SAGTQDMPPPPSDYAERVDSPMAYSSNGKVNGKRSYP). T305 bears the Phosphothreonine mark. Residues S313, S321, S340, and S360 each carry the phosphoserine modification. The tract at residues 363–408 (DFRQPRYSSNDNLETPSKRTPTKGKAGKAKRTDPDHYETDYTTGGE) is disordered. Residues 368 to 381 (RYSSNDNLETPSKR) show a composition bias toward polar residues. Y369 carries the post-translational modification Phosphotyrosine. Phosphoserine occurs at positions 370 and 371. The segment covering 382-391 (TPTKGKAGKA) has biased composition (basic residues). Basic and acidic residues predominate over residues 392-401 (KRTDPDHYET). A phosphotyrosine mark is found at Y399 and Y403. 2 positions are modified to phosphothreonine; by PKC/PRKCH: T404 and T405. Phosphoserine is present on S409. The OCEL domain maps to 415–523 (EDWLREYPPI…MVGDYDRRKT (109 aa)). Residues 433–489 (YKRNFDAGLQEYKSLLAELDEVNKELSRLDRELDDYREESEEYMAAADEYNRLKQVK) are a coiled coil. S491 carries the phosphoserine modification.

It belongs to the ELL/occludin family. In terms of assembly, interacts with TJP1/ZO1. Interacts with VAPA. Interacts with CLDN1, CLDN6, CLDN9, CLDN11, CLDN12 and CLDN17. Interacts with PLSCR1. Interacts with LSR, ILDR1 and ILDR2. Interacts with TJP2/ZO2. Post-translationally, dephosphorylated by PTPRJ.

The protein resides in the cell membrane. It localises to the cell junction. Its subcellular location is the tight junction. Functionally, may play a role in the formation and regulation of the tight junction (TJ) paracellular permeability barrier. May be involved in the organization of actin in endothelial cells. The protein is Occludin (Ocln) of Rattus norvegicus (Rat).